Consider the following 258-residue polypeptide: Thiazole synthase (258 aa).

The active-site Schiff-base intermediate with DXP is lysine 97. Residues glycine 158, 184–185 (AG), and 206–207 (NT) each bind 1-deoxy-D-xylulose 5-phosphate.

It belongs to the ThiG family. Homotetramer. Forms heterodimers with either ThiH or ThiS.

It is found in the cytoplasm. It catalyses the reaction [ThiS sulfur-carrier protein]-C-terminal-Gly-aminoethanethioate + 2-iminoacetate + 1-deoxy-D-xylulose 5-phosphate = [ThiS sulfur-carrier protein]-C-terminal Gly-Gly + 2-[(2R,5Z)-2-carboxy-4-methylthiazol-5(2H)-ylidene]ethyl phosphate + 2 H2O + H(+). Its pathway is cofactor biosynthesis; thiamine diphosphate biosynthesis. Catalyzes the rearrangement of 1-deoxy-D-xylulose 5-phosphate (DXP) to produce the thiazole phosphate moiety of thiamine. Sulfur is provided by the thiocarboxylate moiety of the carrier protein ThiS. In vitro, sulfur can be provided by H(2)S. The protein is Thiazole synthase of Bacteroides fragilis (strain ATCC 25285 / DSM 2151 / CCUG 4856 / JCM 11019 / LMG 10263 / NCTC 9343 / Onslow / VPI 2553 / EN-2).